A 351-amino-acid chain; its full sequence is Calcium homeostasis modulator 1 (351 aa).

Residues 1 to 20 are Cytoplasmic-facing; the sequence is MDKFRMMFQFLQSNQESFMN. Residues 9 to 36 form a central pore region; that stretch reads QFLQSNQESFMNGICGIMALASAQMYSS. A helical membrane pass occupies residues 21 to 36; the sequence is GICGIMALASAQMYSS. The Extracellular portion of the chain corresponds to 37 to 48; sequence FEFSCPCMPEYN. 2 cysteine pairs are disulfide-bonded: Cys41–Cys126 and Cys43–Cys160. Residues 49 to 71 traverse the membrane as a helical segment; that stretch reads YTYGIGLLIIPPIWFFLLGFVLN. Positions 62–69 are phospholipid-binding; sequence WFFLLGFV. Topologically, residues 72-98 are cytoplasmic; the sequence is NNVSVLAEEWKRPTGRRTKDPSVLRYM. The helical transmembrane segment at 99 to 124 threads the bilayer; that stretch reads LCSITQRSLIAPAVWVSVTLMDGKSF. Cys100 carries the S-palmitoyl cysteine lipid modification. A phospholipid-binding region spans residues 104 to 116; it reads QRSLIAPAVWVSV. The Extracellular portion of the chain corresponds to 125–177; that stretch reads LCAFSINLDIEKFGNASLVIGMTETEKLKFLARIPCKDLFEDNEVRVAATRYI. An N-linked (GlcNAc...) asparagine glycan is attached at Asn139. Residues 178-203 form a helical membrane-spanning segment; that stretch reads KCISQACGWMFLLMMTFTAFLIRAIR. Residues 189-199 are phospholipid-binding; the sequence is LLMMTFTAFLI. The Cytoplasmic portion of the chain corresponds to 204–351; sequence PCFTQAAFLK…KEWAVYYSKV (148 aa). Residue Cys205 is the site of S-palmitoyl cysteine attachment. The segment at 259-281 is disordered; it reads HRHQSKDTSDAEEEEKQRSDEDK. A compositionally biased stretch (basic and acidic residues) spans 263–281; the sequence is SKDTSDAEEEEKQRSDEDK.

Belongs to the CALHM family. As to quaternary structure, oligomerizes to form hexamers and octamers. Does not form gap junctions. Associates with CALHM3 as a pore-forming subunit in a hetero-hexameric channel complex. In terms of processing, N-glycosylated. Post-translationally, palmitoylated.

It is found in the cell membrane. The protein localises to the endoplasmic reticulum membrane. The protein resides in the basolateral cell membrane. The catalysed reaction is ATP(in) = ATP(out). It carries out the reaction Ca(2+)(in) = Ca(2+)(out). The enzyme catalyses Mg(2+)(in) = Mg(2+)(out). It catalyses the reaction Na(+)(in) = Na(+)(out). The catalysed reaction is K(+)(in) = K(+)(out). It carries out the reaction Li(+)(in) = Li(+)(out). The enzyme catalyses Rb(+)(in) = Rb(+)(out). It catalyses the reaction Cs(+)(in) = Cs(+)(out). The catalysed reaction is chloride(in) = chloride(out). Its activity is regulated as follows. Activated in response to membrane depolarization and low extracellular Ca(2+) concentration. Inhibited by ruthenium red. In terms of biological role, pore-forming subunit of a voltage-gated ion channel. Has poor ion selectivity and forms a wide pore that mediates permeation of small ions including Ca(2+), Na(+), K(+) and Cl(-), as well as larger ions such as ATP(4-). This is Calcium homeostasis modulator 1 from Oryzias latipes (Japanese rice fish).